A 281-amino-acid chain; its full sequence is Ribulose-5-phosphate-3-epimerase, chloroplastic (281 aa).

A chloroplast-targeting transit peptide spans 1 to 45; that stretch reads MSTSAASLCCSSTQVNGFGLRPERSLLYQPTSFSFSRRRTHGIVK. Residue S63 coordinates substrate. Residues H88, D90, and H121 each coordinate a divalent metal cation. D90 serves as the catalytic Proton acceptor. Substrate-binding positions include H121, 199–202, 232–234, and 254–256; these read GFGG, DGG, and GSA. D232 contributes to the a divalent metal cation binding site. Residue D232 is the Proton donor of the active site.

The protein belongs to the ribulose-phosphate 3-epimerase family. In terms of assembly, homooctamer. Co(2+) serves as cofactor. It depends on Fe(2+) as a cofactor. The cofactor is Mn(2+). Zn(2+) is required as a cofactor. Present in roots, seeds and flowers. Accumulates in nematode feeding sites (NFS).

Its subcellular location is the plastid. The protein localises to the chloroplast thylakoid membrane. The enzyme catalyses D-ribulose 5-phosphate = D-xylulose 5-phosphate. It participates in carbohydrate biosynthesis; Calvin cycle. Its function is as follows. Essential protein required during embryogenesis. Catalyzes the reversible epimerization of D-ribulose 5-phosphate to D-xylulose 5-phosphate. Essential for the early steps of nematode feeding sites (NFS, multinucleated root cells) formation induced by the root-knot nematodes Heterodera schachtii, Meloidogyne incognita, M.javanica and M.hapla. This chain is Ribulose-5-phosphate-3-epimerase, chloroplastic, found in Arabidopsis thaliana (Mouse-ear cress).